A 107-amino-acid chain; its full sequence is DNA polymerase delta subunit 4 (107 aa).

Positions Met1–Arg16 match the PCNA-interaction protein motif (PIP box) motif. The segment at Met1–Ala44 is disordered. Residues Lys15–Leu28 show a composition bias toward basic and acidic residues.

The protein belongs to the DNA polymerase delta subunit 4 family. In terms of assembly, component of the tetrameric DNA polymerase delta complex (Pol-delta4), which consists of POLD1/p125, POLD2/p50, POLD3/p66/p68 and POLD4/p12, with POLD1 bearing DNA polymerase and 3' to 5' proofreading exonuclease activities. Within this complex, directly interacts with POLD1 and POLD2. Directly interacts with PCNA, as do POLD1 and POLD3; this interaction stimulates Pol-delta4 polymerase activity. As POLD1 and POLD2, directly interacts with WRNIP1; this interaction stimulates DNA polymerase delta-mediated DNA synthesis, independently of the presence of PCNA. This stimulation may be due predominantly to an increase of initiation frequency and also to increased processivity. Upon genotoxic stress induced by DNA damaging agents or by replication stress, POLD4 is proteolytically degraded and Pol-delta4 is converted into a trimeric form of the complex (Pol-delta3) which has an increased proofreading activity. The DNA polymerase delta complex interacts with POLDIP2; this interaction is probably mediated through direct binding to POLD2. In terms of processing, ubiquitinated; undergoes 'Lys-48'-linked ubiquitination in response to UV irradiation, leading to proteasomal degradation. This modification is partly mediated by RNF8 and by the DCX(DTL) E3 ubiquitin ligase complex (also called CRL4(CDT2)). Efficient degradation requires the presence of PCNA and is required for the inhibition of fork progression after DNA damage.

Its subcellular location is the nucleus. Functionally, as a component of the tetrameric DNA polymerase delta complex (Pol-delta4), plays a role in high fidelity genome replication and repair. Within this complex, increases the rate of DNA synthesis and decreases fidelity by regulating POLD1 polymerase and proofreading 3' to 5' exonuclease activity. Pol-delta4 participates in Okazaki fragment processing, through both the short flap pathway, as well as a nick translation system. Under conditions of DNA replication stress, required for the repair of broken replication forks through break-induced replication (BIR), a mechanism that may induce segmental genomic duplications of up to 200 kb. Involved in Pol-delta4 translesion synthesis (TLS) of templates carrying O6-methylguanine or abasic sites. Its degradation in response to DNA damage is required for the inhibition of fork progression and cell survival. The sequence is that of DNA polymerase delta subunit 4 (POLD4) from Homo sapiens (Human).